A 293-amino-acid polypeptide reads, in one-letter code: MAIVSAEKFVQAARENGYAVGGFNTNNLEWTQAILRAAEAKQAPVLIQTSMGAAKYMGGYKVCQSLITNLVESMGITVPVAIHLDHGHYGDALECIEVGYTSIMFDGSHLPVEENLAKTAEVVKIAHAKGVSVEAEVGTIGGEEDGIIGKGELAPIEDAKAMVETGIDFLAAGIGNIHGPYPENWEGLALDHLEKLTAAVPGFPIVLHGGSGIPDDQIKEAIRLGVAKVNVNTESQIAFSNATREFARNYEANEAEYDGKKLFDPRKFLAPGMKAVQGAVEERIDVFGSANKA.

D-glyceraldehyde 3-phosphate is bound at residue Ser-50. Residue Asp-85 is the Proton donor of the active site. Zn(2+)-binding residues include His-86, Asp-106, Glu-136, and His-178. Gly-179 contacts dihydroxyacetone phosphate. His-208 serves as a coordination point for Zn(2+). Dihydroxyacetone phosphate contacts are provided by residues 209-211 and 230-233; these read GGS and NVNT.

Belongs to the class II fructose-bisphosphate aldolase family. The cofactor is Zn(2+).

It carries out the reaction beta-D-fructose 1,6-bisphosphate = D-glyceraldehyde 3-phosphate + dihydroxyacetone phosphate. The protein operates within carbohydrate degradation; glycolysis; D-glyceraldehyde 3-phosphate and glycerone phosphate from D-glucose: step 4/4. In terms of biological role, catalyzes the aldol condensation of dihydroxyacetone phosphate (DHAP or glycerone-phosphate) with glyceraldehyde 3-phosphate (G3P) to form fructose 1,6-bisphosphate (FBP) in gluconeogenesis and the reverse reaction in glycolysis. The chain is Fructose-bisphosphate aldolase (fba) from Streptococcus pyogenes serotype M6 (strain ATCC BAA-946 / MGAS10394).